A 402-amino-acid chain; its full sequence is CCA-adding enzyme (402 aa).

Residues glycine 32 and arginine 35 each contribute to the ATP site. The CTP site is built by glycine 32 and arginine 35. Mg(2+) contacts are provided by aspartate 45 and aspartate 47. Positions 116, 159, 162, 165, and 168 each coordinate ATP. Residues arginine 116, aspartate 159, arginine 162, arginine 165, and arginine 168 each coordinate CTP.

This sequence belongs to the tRNA nucleotidyltransferase/poly(A) polymerase family. Bacterial CCA-adding enzyme type 3 subfamily. In terms of assembly, homodimer. Mg(2+) is required as a cofactor.

It carries out the reaction a tRNA precursor + 2 CTP + ATP = a tRNA with a 3' CCA end + 3 diphosphate. The enzyme catalyses a tRNA with a 3' CCA end + 2 CTP + ATP = a tRNA with a 3' CCACCA end + 3 diphosphate. Catalyzes the addition and repair of the essential 3'-terminal CCA sequence in tRNAs without using a nucleic acid template. Adds these three nucleotides in the order of C, C, and A to the tRNA nucleotide-73, using CTP and ATP as substrates and producing inorganic pyrophosphate. tRNA 3'-terminal CCA addition is required both for tRNA processing and repair. Also involved in tRNA surveillance by mediating tandem CCA addition to generate a CCACCA at the 3' terminus of unstable tRNAs. While stable tRNAs receive only 3'-terminal CCA, unstable tRNAs are marked with CCACCA and rapidly degraded. The protein is CCA-adding enzyme of Streptococcus pyogenes serotype M3 (strain ATCC BAA-595 / MGAS315).